The following is a 238-amino-acid chain: Ribosomal RNA small subunit methyltransferase E 1 (238 aa).

It belongs to the RNA methyltransferase RsmE family.

It localises to the cytoplasm. It carries out the reaction uridine(1498) in 16S rRNA + S-adenosyl-L-methionine = N(3)-methyluridine(1498) in 16S rRNA + S-adenosyl-L-homocysteine + H(+). Functionally, specifically methylates the N3 position of the uracil ring of uridine 1498 (m3U1498) in 16S rRNA. Acts on the fully assembled 30S ribosomal subunit. This chain is Ribosomal RNA small subunit methyltransferase E 1 (rsmE1), found in Borreliella burgdorferi (strain ATCC 35210 / DSM 4680 / CIP 102532 / B31) (Borrelia burgdorferi).